The sequence spans 312 residues: ECF RNA polymerase sigma factor SigJ (312 aa).

The tract at residues 6–65 is sigma-70 factor domain-2; the sequence is FEALRQHLMSVAYRLTGTVADAEDIVQEAWLRWDSPDTVIADPRAWLTTVVSRLGLDKLR. The short motif at 29 to 32 is the Polymerase core binding element; sequence DIVQ. A sigma-70 factor domain-4 region spans residues 107–155; that stretch reads MVVLERLRPDQRVAFVLHDGFAVPFAEVAEVLGTSEAAARQLASRARKA. Positions 131 to 150 form a DNA-binding region, H-T-H motif; that stretch reads FAEVAEVLGTSEAAARQLAS. Positions 293-312 are disordered; the sequence is GSPLKERRAQPTGRGRHHRN.

This sequence belongs to the sigma-70 factor family. ECF subfamily. Interacts transiently with the RNA polymerase catalytic core formed by RpoA, RpoB, RpoC and RpoZ (2 alpha, 1 beta, 1 beta' and 1 omega subunit) to form the RNA polymerase holoenzyme that can initiate transcription.

Functionally, sigma factors are initiation factors that promote the attachment of RNA polymerase to specific initiation sites and are then released. Extracytoplasmic function (ECF) sigma factors are held in an inactive form by an anti-sigma factor until released, although no anti-sigma factor is known for this protein. Regulates the promoter of SigI, may not be autoregulated. In Mycobacterium tuberculosis (strain ATCC 25618 / H37Rv), this protein is ECF RNA polymerase sigma factor SigJ (sigJ).